The following is a 369-amino-acid chain: L-lactate oxidase (369 aa).

Positions 13–369 constitute an FMN hydroxy acid dehydrogenase domain; sequence EKKLNVLNLD…KNAKLLNIRY (357 aa). Pyruvate is bound at residue Y39. FMN is bound by residues 92 to 94, S121, and Q143; that span reads PAA. Position 145 (Y145) interacts with pyruvate. An FMN-binding site is contributed by T171. R180 contacts pyruvate. Residues K240 and S262 each coordinate FMN. Pyruvate contacts are provided by H264 and R267. H264 functions as the Proton acceptor in the catalytic mechanism. FMN is bound by residues 295–299 and R319; that span reads DSGIR.

It belongs to the FMN-dependent alpha-hydroxy acid dehydrogenase family. Homotetramer. Requires FMN as cofactor.

The enzyme catalyses (S)-lactate + O2 = pyruvate + H2O2. Its function is as follows. Catalyzes the oxidation of (S)-lactate (L-lactate) to pyruvate, with a reduction of O2 to H2O2. May be involved in the utilization of L-lactate as an energy source for growth. The sequence is that of L-lactate oxidase from Lentilactobacillus hilgardii (strain ATCC 8290 / DSM 20176 / CCUG 30140 / JCM 1155 / KCTC 3500 / NBRC 15886 / NCIMB 8040 / NRRL B-1843 / 9).